Reading from the N-terminus, the 170-residue chain is Adenine phosphoribosyltransferase (170 aa).

The protein belongs to the purine/pyrimidine phosphoribosyltransferase family. Homodimer.

The protein resides in the cytoplasm. It carries out the reaction AMP + diphosphate = 5-phospho-alpha-D-ribose 1-diphosphate + adenine. The protein operates within purine metabolism; AMP biosynthesis via salvage pathway; AMP from adenine: step 1/1. Its function is as follows. Catalyzes a salvage reaction resulting in the formation of AMP, that is energically less costly than de novo synthesis. In Trichodesmium erythraeum (strain IMS101), this protein is Adenine phosphoribosyltransferase.